Here is a 30-residue protein sequence, read N- to C-terminus: AGXXXAHXXYKGPSVVKELVIXXXLGLXAG.

Residues 15-30 (VVKELVIXXXLGLXAG) form a helical membrane-spanning segment.

It belongs to the cytochrome c oxidase subunit 5C family.

It is found in the mitochondrion inner membrane. Its function is as follows. This protein is one of the nuclear-coded polypeptide chains of cytochrome c oxidase, the terminal oxidase in mitochondrial electron transport. In Solanum tuberosum (Potato), this protein is Cytochrome c oxidase subunit 5C (COX5C).